Reading from the N-terminus, the 187-residue chain is Peptidyl-tRNA hydrolase (187 aa).

Position 14 (H14) interacts with tRNA. Catalysis depends on H19, which acts as the Proton acceptor. TRNA is bound by residues Y62, N64, and N110.

Belongs to the PTH family. As to quaternary structure, monomer.

It localises to the cytoplasm. The catalysed reaction is an N-acyl-L-alpha-aminoacyl-tRNA + H2O = an N-acyl-L-amino acid + a tRNA + H(+). Functionally, hydrolyzes ribosome-free peptidyl-tRNAs (with 1 or more amino acids incorporated), which drop off the ribosome during protein synthesis, or as a result of ribosome stalling. In terms of biological role, catalyzes the release of premature peptidyl moieties from peptidyl-tRNA molecules trapped in stalled 50S ribosomal subunits, and thus maintains levels of free tRNAs and 50S ribosomes. The protein is Peptidyl-tRNA hydrolase of Chlorobaculum tepidum (strain ATCC 49652 / DSM 12025 / NBRC 103806 / TLS) (Chlorobium tepidum).